We begin with the raw amino-acid sequence, 76 residues long: Large ribosomal subunit protein bL31 (76 aa).

Belongs to the bacterial ribosomal protein bL31 family. Type A subfamily. In terms of assembly, part of the 50S ribosomal subunit.

Its function is as follows. Binds the 23S rRNA. This is Large ribosomal subunit protein bL31 from Rhizorhabdus wittichii (strain DSM 6014 / CCUG 31198 / JCM 15750 / NBRC 105917 / EY 4224 / RW1) (Sphingomonas wittichii).